The chain runs to 455 residues: tRNA modification GTPase MnmE (455 aa).

(6S)-5-formyl-5,6,7,8-tetrahydrofolate contacts are provided by R22, E85, and R124. The TrmE-type G domain occupies 220–377; that stretch reads GIYTVIVGRP…VEKAIKEAIL (158 aa). N230 lines the K(+) pocket. GTP contacts are provided by residues 230–235, 249–255, and 274–277; these read NVGKSS, TDIPGTT, and DTAG. S234 contacts Mg(2+). 3 residues coordinate K(+): T249, I251, and T254. A Mg(2+)-binding site is contributed by T255. K455 lines the (6S)-5-formyl-5,6,7,8-tetrahydrofolate pocket.

This sequence belongs to the TRAFAC class TrmE-Era-EngA-EngB-Septin-like GTPase superfamily. TrmE GTPase family. Homodimer. Heterotetramer of two MnmE and two MnmG subunits. The cofactor is K(+).

It localises to the cytoplasm. Exhibits a very high intrinsic GTPase hydrolysis rate. Involved in the addition of a carboxymethylaminomethyl (cmnm) group at the wobble position (U34) of certain tRNAs, forming tRNA-cmnm(5)s(2)U34. This is tRNA modification GTPase MnmE from Caldicellulosiruptor saccharolyticus (strain ATCC 43494 / DSM 8903 / Tp8T 6331).